Reading from the N-terminus, the 71-residue chain is UPF0435 protein RBAM_008100 (71 aa).

The protein belongs to the UPF0435 family.

The chain is UPF0435 protein RBAM_008100 from Bacillus velezensis (strain DSM 23117 / BGSC 10A6 / LMG 26770 / FZB42) (Bacillus amyloliquefaciens subsp. plantarum).